A 396-amino-acid chain; its full sequence is Elongation factor Tu 2 (396 aa).

Positions 10–206 (KPHVNVGTIG…ALDTYIPTPK (197 aa)) constitute a tr-type G domain. A G1 region spans residues 19-26 (GHVDHGKT). GTP is bound at residue 19–26 (GHVDHGKT). Threonine 26 serves as a coordination point for Mg(2+). A G2 region spans residues 60-64 (GITIS). The G3 stretch occupies residues 81-84 (DCPG). Residues 81-85 (DCPGH) and 136-139 (NKAD) contribute to the GTP site. Residues 136–139 (NKAD) form a G4 region. Residues 174–176 (SAL) are G5.

This sequence belongs to the TRAFAC class translation factor GTPase superfamily. Classic translation factor GTPase family. EF-Tu/EF-1A subfamily. As to quaternary structure, monomer.

It is found in the cytoplasm. It catalyses the reaction GTP + H2O = GDP + phosphate + H(+). Functionally, GTP hydrolase that promotes the GTP-dependent binding of aminoacyl-tRNA to the A-site of ribosomes during protein biosynthesis. The polypeptide is Elongation factor Tu 2 (Ruthia magnifica subsp. Calyptogena magnifica).